The primary structure comprises 333 residues: Flotillin-like protein FloA (333 aa).

A helical membrane pass occupies residues 10–30; it reads IFLIAGGIIFLVLFFHYVPFF.

It belongs to the flotillin-like FloA family. As to quaternary structure, homooligomerizes.

Its subcellular location is the cell membrane. The protein resides in the membrane raft. Its function is as follows. Found in functional membrane microdomains (FMM) that may be equivalent to eukaryotic membrane rafts. FMMs are highly dynamic and increase in number as cells age. Flotillins are thought to be important factors in membrane fluidity. This is Flotillin-like protein FloA from Bacteroides fragilis (strain ATCC 25285 / DSM 2151 / CCUG 4856 / JCM 11019 / LMG 10263 / NCTC 9343 / Onslow / VPI 2553 / EN-2).